A 335-amino-acid chain; its full sequence is Mitochondrial amidoxime reducing component 2 (335 aa).

A mitochondrion-targeting transit peptide spans 1–35 (MGASSSSALARLGLPARPWPRWLGVAALGLAAVAL). Glycyl lysine isopeptide (Lys-Gly) (interchain with G-Cter in ubiquitin) cross-links involve residues Lys-59, Lys-138, and Lys-144. Lys-156 bears the N6-acetyllysine; alternate mark. Lys-156 participates in a covalent cross-link: Glycyl lysine isopeptide (Lys-Gly) (interchain with G-Cter in ubiquitin); alternate. Glycyl lysine isopeptide (Lys-Gly) (interchain with G-Cter in ubiquitin) cross-links involve residues Lys-166, Lys-173, Lys-187, Lys-287, and Lys-294. Residues 188-334 (GRTSRKLLPT…LRVGDPVYRM (147 aa)) form the MOSC domain.

Component of a complex composed of cytochrome b5, NADH-cytochrome b5 reductase (CYB5R3) and MTARC2. Requires Mo-molybdopterin as cofactor. Post-translationally, ubiquitinated by PRKN during mitophagy, leading to its degradation and enhancement of mitophagy. Deubiquitinated by USP30.

Its subcellular location is the mitochondrion outer membrane. It localises to the peroxisome. The enzyme catalyses N(omega)-hydroxy-L-arginine + 2 Fe(II)-[cytochrome b5] + 2 H(+) = L-arginine + 2 Fe(III)-[cytochrome b5] + H2O. In terms of biological role, catalyzes the reduction of N-oxygenated molecules, acting as a counterpart of cytochrome P450 and flavin-containing monooxygenases in metabolic cycles. As a component of prodrug-converting system, reduces a multitude of N-hydroxylated prodrugs particularly amidoximes, leading to increased drug bioavailability. May be involved in mitochondrial N(omega)-hydroxy-L-arginine (NOHA) reduction, regulating endogenous nitric oxide levels and biosynthesis. Postulated to cleave the N-OH bond of N-hydroxylated substrates in concert with electron transfer from NADH to cytochrome b5 reductase then to cytochrome b5, the ultimate electron donor that primes the active site for substrate reduction. This is Mitochondrial amidoxime reducing component 2 from Homo sapiens (Human).